The chain runs to 152 residues: Deoxyuridine 5'-triphosphate nucleotidohydrolase (152 aa).

Substrate is bound by residues 71 to 73 (RSG), asparagine 84, 88 to 90 (LID), and methionine 98.

Belongs to the dUTPase family. It depends on Mg(2+) as a cofactor.

It catalyses the reaction dUTP + H2O = dUMP + diphosphate + H(+). It functions in the pathway pyrimidine metabolism; dUMP biosynthesis; dUMP from dCTP (dUTP route): step 2/2. Functionally, this enzyme is involved in nucleotide metabolism: it produces dUMP, the immediate precursor of thymidine nucleotides and it decreases the intracellular concentration of dUTP so that uracil cannot be incorporated into DNA. The sequence is that of Deoxyuridine 5'-triphosphate nucleotidohydrolase from Shewanella sp. (strain MR-7).